The primary structure comprises 487 residues: Wax ester synthase/diacylglycerol acyltransferase 3 (487 aa).

Residues 1–193 (MYTMKKGKDM…KHASSNKKSW (193 aa)) are Cytoplasmic-facing. Histidine 151 functions as the Proton acceptor in the catalytic mechanism. Residues 194-214 (WLVGRFWFMIRIIFTTVVELF) form a helical membrane-spanning segment. The Lumenal segment spans residues 215–487 (KYLLTLCFMR…MEKGVHKMEV (273 aa)).

In the N-terminal section; belongs to the long-chain O-acyltransferase family. In terms of tissue distribution, mostly expressed in flowers and siliques.

The protein localises to the cell membrane. Its subcellular location is the endoplasmic reticulum membrane. The enzyme catalyses an acyl-CoA + a 1,2-diacyl-sn-glycerol = a triacyl-sn-glycerol + CoA. It catalyses the reaction a long chain fatty alcohol + a fatty acyl-CoA = a wax ester + CoA. Its pathway is glycerolipid metabolism; triacylglycerol biosynthesis. The protein operates within lipid metabolism. Its function is as follows. Bifunctional wax ester synthase/diacylglycerol acyltransferase. Involved in cuticular wax biosynthesis. This Arabidopsis thaliana (Mouse-ear cress) protein is Wax ester synthase/diacylglycerol acyltransferase 3.